We begin with the raw amino-acid sequence, 308 residues long: Tyrosine recombinase XerD (308 aa).

The Core-binding (CB) domain occupies 13 to 97 (PSSTEAIQRF…VFKRFFQWAL (85 aa)). The 185-residue stretch at 118–302 (RVPKTLSEAQ…ARERLRTLHA (185 aa)) folds into the Tyr recombinase domain. Residues arginine 158, lysine 183, histidine 254, arginine 257, and histidine 280 contribute to the active site. Tyrosine 289 serves as the catalytic O-(3'-phospho-DNA)-tyrosine intermediate.

Belongs to the 'phage' integrase family. XerD subfamily. Forms a cyclic heterotetrameric complex composed of two molecules of XerC and two molecules of XerD.

Its subcellular location is the cytoplasm. Its function is as follows. Site-specific tyrosine recombinase, which acts by catalyzing the cutting and rejoining of the recombining DNA molecules. The XerC-XerD complex is essential to convert dimers of the bacterial chromosome into monomers to permit their segregation at cell division. It also contributes to the segregational stability of plasmids. The protein is Tyrosine recombinase XerD of Ralstonia nicotianae (strain ATCC BAA-1114 / GMI1000) (Ralstonia solanacearum).